Reading from the N-terminus, the 322-residue chain is Malate dehydrogenase (322 aa).

NAD(+)-binding positions include 10–15 (GSGQIG) and D34. 2 residues coordinate substrate: R83 and R89. NAD(+) is bound by residues N96 and 119-121 (ITN). Substrate-binding residues include N121 and R152. Catalysis depends on H176, which acts as the Proton acceptor.

Belongs to the LDH/MDH superfamily. MDH type 3 family.

The catalysed reaction is (S)-malate + NAD(+) = oxaloacetate + NADH + H(+). Functionally, catalyzes the reversible oxidation of malate to oxaloacetate. The sequence is that of Malate dehydrogenase from Rhodopseudomonas palustris (strain HaA2).